Reading from the N-terminus, the 977-residue chain is Serine/threonine-protein kinase/endoribonuclease IRE1 (977 aa).

Residues Met-1–Gly-18 form the signal peptide. The Lumenal portion of the chain corresponds to Ile-19 to Asp-443. Asn-176 carries an N-linked (GlcNAc...) asparagine glycan. Over residues Thr-410–Ser-419 the composition is skewed to polar residues. Residues Thr-410–Glu-434 form a disordered region. A helical membrane pass occupies residues Met-444–Tyr-464. Over Pro-465–Leu-977 the chain is Cytoplasmic. The interval Gln-491–Glu-559 is disordered. Residues Thr-513–Leu-552 show a composition bias toward low complexity. Residues Phe-571–Phe-832 enclose the Protein kinase domain. Residues Leu-577–Ile-585, Lys-599, and Glu-643–Cys-645 each bind ATP. Asp-688 serves as the catalytic Proton acceptor. Residues Lys-690–Asn-693 and Asp-711 each bind ATP. A phosphoserine mark is found at Ser-724 and Ser-729. Positions Leu-835–His-963 constitute a KEN domain. The interval Asn-906–Lys-907 is interacts with hydroxy-aryl-aldehyde inhibitors. A Phosphothreonine modification is found at Thr-973.

The protein belongs to the protein kinase superfamily. Ser/Thr protein kinase family. In terms of assembly, monomer. Homodimer; disulfide-linked; homodimerization takes place in response to endoplasmic reticulum stress and promotes activation of the kinase and endoribonuclease activities. Dimer formation is driven by hydrophobic interactions within the N-terminal luminal domains and stabilized by disulfide bridges. Interacts (via the luminal region) with DNAJB9/ERdj4; interaction takes place in unstressed cells and promotes recruitment of HSPA5/BiP. Interacts (via the luminal region) with HSPA5/BiP; HSPA5/BiP is a negative regulator of the unfolded protein response (UPR) that prevents homodimerization of ERN1/IRE1 and subsequent activation of the protein. Interaction with HSPA5 also competitively inhibits ERN1 interaction with MANF. Interacts with PDIA6, a negative regulator of the UPR; the interaction is direct and disrupts homodimerization. Interacts with DAB2IP (via PH domain); the interaction occurs in a endoplasmic reticulum stress-induced dependent manner and is required for subsequent recruitment of TRAF2 to ERN1/IRE1. Interacts with TAOK3 and TRAF2. Interacts with RNF13. Interacts with LACC1. Interacts (when unphosphorylated) with DDRGK1; interaction is dependent on UFM1 and takes place in response to endoplasmic reticulum stress, regulating ERN1/IRE1-alpha stability. Interacts (via N-terminus) with P4HB/PDIA1; the interaction is enhanced by phosphorylation of P4HB by FAM20C in response to endoplasmic reticulum stress and results in attenuation of ERN1 activity. Interacts with TMBIM6; this interaction inhibits ERN1 activity. Interacts (via luminal domain) with MANF (via C-terminus); the interaction is decreased in the presence of increasing concentrations of Ca(2+). The cofactor is Mg(2+). Autophosphorylated following homodimerization. Autophosphorylation promotes activation of the endoribonuclease domain. In response to ER stress, phosphorylated at Ser-724, Ser-729 and possibly Ser-726; phosphorylation promotes oligomerization and endoribonuclease activity. Dephosphorylated at Ser-724, Ser-729 and possibly Ser-726 by RPAP2 to abort failed ER-stress adaptation and trigger apoptosis. Phosphorylated at Ser-724; in response to the ER stressor tunicamycin. In terms of processing, ADP-ribosylated by PARP16 upon ER stress, which increases both kinase and endonuclease activities. In terms of tissue distribution, ubiquitously expressed. High levels observed in pancreatic tissue.

The protein localises to the endoplasmic reticulum membrane. It catalyses the reaction L-seryl-[protein] + ATP = O-phospho-L-seryl-[protein] + ADP + H(+). The enzyme catalyses L-threonyl-[protein] + ATP = O-phospho-L-threonyl-[protein] + ADP + H(+). Its activity is regulated as follows. The kinase domain is activated by trans-autophosphorylation following homodimerization. Kinase activity is required for activation of the endoribonuclease domain. Endoribonuclease activity is specifically inhibited by hydroxy-aryl-aldehydes (HAA). In terms of biological role, serine/threonine-protein kinase and endoribonuclease that acts as a key sensor for the endoplasmic reticulum unfolded protein response (UPR). In unstressed cells, the endoplasmic reticulum luminal domain is maintained in its inactive monomeric state by binding to the endoplasmic reticulum chaperone HSPA5/BiP. Accumulation of misfolded proteins in the endoplasmic reticulum causes release of HSPA5/BiP, allowing the luminal domain to homodimerize, promoting autophosphorylation of the kinase domain and subsequent activation of the endoribonuclease activity. The endoribonuclease activity is specific for XBP1 mRNA and excises 26 nucleotides from XBP1 mRNA. The resulting spliced transcript of XBP1 encodes a transcriptional activator protein that up-regulates expression of UPR target genes. Acts as an upstream signal for ER stress-induced GORASP2-mediated unconventional (ER/Golgi-independent) trafficking of CFTR to cell membrane by modulating the expression and localization of SEC16A. This is Serine/threonine-protein kinase/endoribonuclease IRE1 from Homo sapiens (Human).